We begin with the raw amino-acid sequence, 428 residues long: Serine--tRNA ligase (428 aa).

Residue T231–E233 participates in L-serine binding. ATP is bound at residue R262–E264. E285 is an L-serine binding site. E349–S352 is a binding site for ATP. S385 is a binding site for L-serine.

This sequence belongs to the class-II aminoacyl-tRNA synthetase family. Type-1 seryl-tRNA synthetase subfamily. Homodimer. The tRNA molecule binds across the dimer.

The protein resides in the cytoplasm. The enzyme catalyses tRNA(Ser) + L-serine + ATP = L-seryl-tRNA(Ser) + AMP + diphosphate + H(+). It carries out the reaction tRNA(Sec) + L-serine + ATP = L-seryl-tRNA(Sec) + AMP + diphosphate + H(+). It participates in aminoacyl-tRNA biosynthesis; selenocysteinyl-tRNA(Sec) biosynthesis; L-seryl-tRNA(Sec) from L-serine and tRNA(Sec): step 1/1. Its function is as follows. Catalyzes the attachment of serine to tRNA(Ser). Is also able to aminoacylate tRNA(Sec) with serine, to form the misacylated tRNA L-seryl-tRNA(Sec), which will be further converted into selenocysteinyl-tRNA(Sec). This is Serine--tRNA ligase from Methylorubrum extorquens (strain CM4 / NCIMB 13688) (Methylobacterium extorquens).